We begin with the raw amino-acid sequence, 96 residues long: Citrate lyase acyl carrier protein (96 aa).

An O-(phosphoribosyl dephospho-coenzyme A)serine modification is found at S14.

Belongs to the CitD family. Oligomer with a subunit composition of (alpha,beta,gamma)6.

It is found in the cytoplasm. Its function is as follows. Covalent carrier of the coenzyme of citrate lyase. The sequence is that of Citrate lyase acyl carrier protein from Pectobacterium atrosepticum (strain SCRI 1043 / ATCC BAA-672) (Erwinia carotovora subsp. atroseptica).